We begin with the raw amino-acid sequence, 675 residues long: Probable potassium transport system protein Kup (675 aa).

12 consecutive transmembrane segments (helical) span residues L12–V32, V55–L75, W98–P118, W143–G163, S170–I190, M216–S236, T249–L269, I296–G316, I345–F365, A374–V394, F401–S421, and G428–F448.

It belongs to the HAK/KUP transporter (TC 2.A.72) family.

The protein localises to the cell membrane. It catalyses the reaction K(+)(in) + H(+)(in) = K(+)(out) + H(+)(out). Functionally, transport of potassium into the cell. Likely operates as a K(+):H(+) symporter. The sequence is that of Probable potassium transport system protein Kup from Levilactobacillus brevis (strain ATCC 367 / BCRC 12310 / CIP 105137 / JCM 1170 / LMG 11437 / NCIMB 947 / NCTC 947) (Lactobacillus brevis).